A 158-amino-acid polypeptide reads, in one-letter code: Ribonuclease H (158 aa).

The RNase H type-1 domain maps to 3–144 (GLKQLLIFTD…CDTLAREAAE (142 aa)). Positions 12, 50, 72, and 136 each coordinate Mg(2+).

The protein belongs to the RNase H family. Monomer. Requires Mg(2+) as cofactor.

It is found in the cytoplasm. It catalyses the reaction Endonucleolytic cleavage to 5'-phosphomonoester.. Functionally, endonuclease that specifically degrades the RNA of RNA-DNA hybrids. The chain is Ribonuclease H from Shewanella loihica (strain ATCC BAA-1088 / PV-4).